The chain runs to 218 residues: Protein P9 (218 aa).

It localises to the virion membrane. In Pseudoalteromonas espejiana (Bacteriophage PM2), this protein is Protein P9 (IX).